The primary structure comprises 341 residues: Phenylalanine--tRNA ligase alpha subunit (341 aa).

Glu-254 lines the Mg(2+) pocket.

The protein belongs to the class-II aminoacyl-tRNA synthetase family. Phe-tRNA synthetase alpha subunit type 1 subfamily. As to quaternary structure, tetramer of two alpha and two beta subunits. Mg(2+) is required as a cofactor.

It is found in the cytoplasm. It catalyses the reaction tRNA(Phe) + L-phenylalanine + ATP = L-phenylalanyl-tRNA(Phe) + AMP + diphosphate + H(+). This chain is Phenylalanine--tRNA ligase alpha subunit, found in Chlorobaculum tepidum (strain ATCC 49652 / DSM 12025 / NBRC 103806 / TLS) (Chlorobium tepidum).